The following is a 76-amino-acid chain: Putative membrane protein insertion efficiency factor (76 aa).

Belongs to the UPF0161 family.

It is found in the cell inner membrane. Functionally, could be involved in insertion of integral membrane proteins into the membrane. The protein is Putative membrane protein insertion efficiency factor of Paraburkholderia phytofirmans (strain DSM 17436 / LMG 22146 / PsJN) (Burkholderia phytofirmans).